The primary structure comprises 168 residues: 3-isopropylmalate dehydratase small subunit (168 aa).

Belongs to the LeuD family. LeuD type 2 subfamily. As to quaternary structure, heterodimer of LeuC and LeuD.

The catalysed reaction is (2R,3S)-3-isopropylmalate = (2S)-2-isopropylmalate. Its pathway is amino-acid biosynthesis; L-leucine biosynthesis; L-leucine from 3-methyl-2-oxobutanoate: step 2/4. Functionally, catalyzes the isomerization between 2-isopropylmalate and 3-isopropylmalate, via the formation of 2-isopropylmaleate. This is 3-isopropylmalate dehydratase small subunit from Thermodesulfovibrio yellowstonii (strain ATCC 51303 / DSM 11347 / YP87).